The primary structure comprises 222 residues: MSNNCTNTVPRPEVIAALKDWNFAVSVILLFITVLLQWGYPSRCKPIWVIKMFILWLLWPLSIAAAVFAAIHPINSVAFGFAIAFACISGIMWLSYFISSFRLLCRTGSAWSFMPETDMLINIPLLGRTVTRPIISDSPAVQFLIIRGELRFDGFTLGRCDPGDMPDIVTIARPNALHWYKRALTRNMYTRSAILVYIKYKVGNHRVQNTTEDGDRLAMFVA.

Over Met1–Asp20 the chain is Virion surface. A helical membrane pass occupies residues Trp21–Pro41. The Intravirion segment spans residues Ser42 to Lys51. Residues Met52–His72 form a helical membrane-spanning segment. Over Pro73–Gly80 the chain is Virion surface. A helical transmembrane segment spans residues Phe81 to Phe101. Over Arg102 to Ala222 the chain is Intravirion.

This sequence belongs to the betacoronaviruses M protein family. Homomultimer. Interacts with envelope E protein in the budding compartment of the host cell, which is located between endoplasmic reticulum and the Golgi complex. Forms a complex with HE and S proteins. Interacts with nucleocapsid N protein. This interaction probably participates in RNA packaging into the virus.

It localises to the virion membrane. The protein localises to the host Golgi apparatus membrane. Its function is as follows. Component of the viral envelope that plays a central role in virus morphogenesis and assembly via its interactions with other viral proteins. The sequence is that of Membrane protein from Rousettus leschenaultii (Leschenault's rousette).